The primary structure comprises 443 residues: ATP-dependent protease ATPase subunit HslU (443 aa).

Residues Ile18, 60-65 (GVGKTE), Asp256, Glu321, and Arg393 each bind ATP.

Belongs to the ClpX chaperone family. HslU subfamily. A double ring-shaped homohexamer of HslV is capped on each side by a ring-shaped HslU homohexamer. The assembly of the HslU/HslV complex is dependent on binding of ATP.

It is found in the cytoplasm. ATPase subunit of a proteasome-like degradation complex; this subunit has chaperone activity. The binding of ATP and its subsequent hydrolysis by HslU are essential for unfolding of protein substrates subsequently hydrolyzed by HslV. HslU recognizes the N-terminal part of its protein substrates and unfolds these before they are guided to HslV for hydrolysis. The sequence is that of ATP-dependent protease ATPase subunit HslU from Salmonella arizonae (strain ATCC BAA-731 / CDC346-86 / RSK2980).